Reading from the N-terminus, the 190-residue chain is GTP cyclohydrolase 1 (190 aa).

Positions 75, 78, and 146 each coordinate Zn(2+).

This sequence belongs to the GTP cyclohydrolase I family. As to quaternary structure, homomer.

The catalysed reaction is GTP + H2O = 7,8-dihydroneopterin 3'-triphosphate + formate + H(+). It functions in the pathway cofactor biosynthesis; 7,8-dihydroneopterin triphosphate biosynthesis; 7,8-dihydroneopterin triphosphate from GTP: step 1/1. This Campylobacter concisus (strain 13826) protein is GTP cyclohydrolase 1.